Reading from the N-terminus, the 1219-residue chain is MDKEERKTINKGQEDEMEIHGYNLCRWKLAMVFVGVICTGGFLLLLLYWLPEWRVKATCVRAAVKDCEVVLLRTTDEFRVWFCAKIHFLPVENQPNLNAKCLVNEVSNGHAVHLTEENRCEMNKYSQSQSQQMRYFTHHSIRYFWNDAIHNFDFLKGLDEGVSCASLYEKHSAGLTQGMHAYRKLIYGVNEIAVKVPSVFKLLIKEVLNPFYIFQLFSVILWSVDEYYYYALAIVIMSVVSIISSLYSIRKQYVMLHDMVATHSTVRVSVCRENEEIEEIFSTDLVPGDVMIIPLNGTVMPCDAVLINGTCIVNESMLTGESVPVTKTNLPNPSVDVKGMGEEQYSPETHKRHTLFCGTTVIQTRFYTGELVKAIVVRTGFSTSKGQLVRSILYPKPTDFKLYRDAYLFLLCLVVVAGIGFIYTIINSILNEKEVQEIIIKSLDIITITVPPALPAAMTAGIVYAQRRLKKVGIFCISPQRINICGQLNLVCFDKTGTLTEDGLDLWGIQRVENTRFLLPEDNVCSEMLVKSQFVACMATCHSLTKIEGVLSGDPLDLKMFEAIGWILEEATEEETALHNRIMPTVVRPSKQLLPEPTTAGNQEMELFELPAIYEIGIVRQFPFSSALQRMSVVARTLGEKRMDAYMKGAPEVVASLCKPETVPVDFEKVLEDYTKQGFRVIALAHRKLESKLTWHKVQHISRDAIENNMDFMGLIIMQNKLKQETPAVLEDLHKANIRTVMVTGDNMLTAVSVARDCGMILPQDKVIIAEALPPKDGKVAKINWHYTDSLSQCSESSAIDSEAIPIKLAHDSLEDLEVTRYHFAMNGKSFSVILEHFQDLVPKLMLHGTVFARMAPDQKTQLVEALQNVDYFVGMCGDGANDCGALKRAHGGISLSELEASVASPFTSKTPSISCVPNLIREGRAALMTSFCVFKFMALYSIIQYFSVTLLYSILSNLGDFQFLFIDLAIILVVVFTMSLNPAWKELVAQRPPSGLISGALLFSVLSQIVISVGFQSLGFFWVKQYKVCDPNSDVCNTTRSACWNSSHLYNGTELDSCKIQNYENTTVFFISSFQYLTVAVAFSKGKPFRQPCYKNYFFVISVIILYVFILFIMLHPVASVDQVLEIMCVPYQWRIYMLIIVLINAFVSITVEESVDRWGKCCLSWALSCRKKTPKAKYMYLAQELRFDPEWPPKPQTTTEAKAVVKENGSCQIITIA.

Residues 1-28 (MDKEERKTINKGQEDEMEIHGYNLCRWK) are Cytoplasmic-facing. Residues 29 to 49 (LAMVFVGVICTGGFLLLLLYW) lie within the membrane without spanning it. Residues 50-201 (LPEWRVKATC…IAVKVPSVFK (152 aa)) are Cytoplasmic-facing. The chain crosses the membrane as a helical span at residues 202–222 (LLIKEVLNPFYIFQLFSVILW). The Lumenal segment spans residues 223 to 228 (SVDEYY). A helical membrane pass occupies residues 229 to 249 (YYALAIVIMSVVSIISSLYSI). The Cytoplasmic portion of the chain corresponds to 250–405 (RKQYVMLHDM…KPTDFKLYRD (156 aa)). Residues 406–426 (AYLFLLCLVVVAGIGFIYTII) form a helical membrane-spanning segment. Residues 427–444 (NSILNEKEVQEIIIKSLD) lie on the Lumenal side of the membrane. Residues 445–465 (IITITVPPALPAAMTAGIVYA) form a helical membrane-spanning segment. The Cytoplasmic segment spans residues 466–936 (QRRLKKVGIF…ALMTSFCVFK (471 aa)). The active-site 4-aspartylphosphate intermediate is the Asp494. 2 residues coordinate Mg(2+): Asp494 and Thr496. Residues 494 to 496 (DKT), Phe624, Arg680, and Asp746 each bind ATP. Phosphoserine is present on Ser813. Mg(2+) is bound by residues Asp879 and Asp883. 879-883 (DGAND) serves as a coordination point for ATP. Residues 937–957 (FMALYSIIQYFSVTLLYSILS) form a helical membrane-spanning segment. Residue Asn958 is a topological domain, lumenal. Residues 959–979 (LGDFQFLFIDLAIILVVVFTM) traverse the membrane as a helical segment. Residues 980–995 (SLNPAWKELVAQRPPS) lie on the Cytoplasmic side of the membrane. Residues 996 to 1016 (GLISGALLFSVLSQIVISVGF) form a helical membrane-spanning segment. At 1017-1066 (QSLGFFWVKQYKVCDPNSDVCNTTRSACWNSSHLYNGTELDSCKIQNYEN) the chain is on the lumenal side. A helical membrane pass occupies residues 1067–1087 (TTVFFISSFQYLTVAVAFSKG). Topologically, residues 1088-1098 (KPFRQPCYKNY) are cytoplasmic. Residues 1099-1119 (FFVISVIILYVFILFIMLHPV) traverse the membrane as a helical segment. Over 1120–1136 (ASVDQVLEIMCVPYQWR) the chain is Lumenal. The chain crosses the membrane as a helical span at residues 1137 to 1157 (IYMLIIVLINAFVSITVEESV). Residues 1158–1219 (DRWGKCCLSW…NGSCQIITIA (62 aa)) are Cytoplasmic-facing.

It belongs to the cation transport ATPase (P-type) (TC 3.A.3) family. Type V subfamily. In terms of tissue distribution, expression is greatest in liver, followed by kidney, colon, stomach, brain and small intestine. Isoform 1 is highly expressed in the kidney while isoform 2 is highly expressed in the brain.

It is found in the recycling endosome membrane. It localises to the early endosome membrane. The protein resides in the late endosome membrane. It catalyses the reaction putrescine(out) + ATP + H2O = putrescine(in) + ADP + phosphate + H(+). Functionally, ATP-driven pump involved in endocytosis-dependent polyamine transport. Uses ATP as an energy source to transfer polyamine precursor putrescine from the endosomal compartment to the cytosol. In Mus musculus (Mouse), this protein is Polyamine-transporting ATPase 13A3.